The sequence spans 280 residues: MMESGDRQNNKIGIIGGSGLESIELFTVKDKVNCNTPYGKPSSSLINGTLNGIECVLLSRHGDSHDIMPTDVNYRANLYALKEAGCSIILATTACGSLQEELKPTDFVVIDQFIDRTTKRHSTFYDGQNVQMKGVCHIPMRNPFCEKLQNVLLSACNVNNVSCHSKGTMVTIEGPRFSTYAESNLFRKWGGSLINMTTVPEVVLANELGMLYAALAMVTDYDCWKEDHASVNVENVMKTMKVNRGNALKVLVSAVEIISKQNLQPDIQLAEKNAKNSVML.

Residues Ser18, Arg60–His61, and Thr93–Ala94 each bind phosphate. Met196 is a substrate binding site. Residue Thr197 coordinates phosphate. A substrate-binding site is contributed by Asp220–Asp222.

Belongs to the PNP/MTAP phosphorylase family. MTAP subfamily. In terms of assembly, homotrimer.

Its subcellular location is the cytoplasm. It is found in the nucleus. It catalyses the reaction S-methyl-5'-thioadenosine + phosphate = 5-(methylsulfanyl)-alpha-D-ribose 1-phosphate + adenine. The protein operates within amino-acid biosynthesis; L-methionine biosynthesis via salvage pathway; S-methyl-5-thio-alpha-D-ribose 1-phosphate from S-methyl-5'-thioadenosine (phosphorylase route): step 1/1. Catalyzes the reversible phosphorylation of S-methyl-5'-thioadenosine (MTA) to adenine and 5-methylthioribose-1-phosphate. Involved in the breakdown of MTA, a major by-product of polyamine biosynthesis. Responsible for the first step in the methionine salvage pathway after MTA has been generated from S-adenosylmethionine. Has broad substrate specificity with 6-aminopurine nucleosides as preferred substrates. This Ciona intestinalis (Transparent sea squirt) protein is S-methyl-5'-thioadenosine phosphorylase.